Consider the following 368-residue polypeptide: Probable dual-specificity RNA methyltransferase RlmN (368 aa).

Catalysis depends on E100, which acts as the Proton acceptor. Residues 106 to 344 (QHYGLSVCVT…CVVRQEHGTD (239 aa)) form the Radical SAM core domain. A disulfide bridge connects residues C113 and C349. Residues C120, C124, and C127 each contribute to the [4Fe-4S] cluster site. S-adenosyl-L-methionine contacts are provided by residues 172–173 (GE), S204, 227–229 (SLH), and N305. Residue C349 is the S-methylcysteine intermediate of the active site.

This sequence belongs to the radical SAM superfamily. RlmN family. It depends on [4Fe-4S] cluster as a cofactor.

The protein resides in the cytoplasm. It carries out the reaction adenosine(2503) in 23S rRNA + 2 reduced [2Fe-2S]-[ferredoxin] + 2 S-adenosyl-L-methionine = 2-methyladenosine(2503) in 23S rRNA + 5'-deoxyadenosine + L-methionine + 2 oxidized [2Fe-2S]-[ferredoxin] + S-adenosyl-L-homocysteine. The enzyme catalyses adenosine(37) in tRNA + 2 reduced [2Fe-2S]-[ferredoxin] + 2 S-adenosyl-L-methionine = 2-methyladenosine(37) in tRNA + 5'-deoxyadenosine + L-methionine + 2 oxidized [2Fe-2S]-[ferredoxin] + S-adenosyl-L-homocysteine. Functionally, specifically methylates position 2 of adenine 2503 in 23S rRNA and position 2 of adenine 37 in tRNAs. The sequence is that of Probable dual-specificity RNA methyltransferase RlmN from Streptococcus agalactiae serotype Ia (strain ATCC 27591 / A909 / CDC SS700).